A 217-amino-acid polypeptide reads, in one-letter code: MATGSHTTTLLLAVALLGLPWPQEAGAFPAMPLSSLFANAVLRAQHLHQLAADTYKEFERAYIPEGQRYSIQNTQAAFCFSETIPAPTGKDEAQQRSDMELLRFSLLLIQSWLGPVQLLSRVFTNSLVLGTLDRVYEKLKDLEEGIQALMRELEDGSPRVGQILKQTYDKFDTNLRSDDALLKNYGLLSCFKKDLHKAETYLRVMKCRRFVESSCAF.

A signal peptide spans 1 to 26 (MATGSHTTTLLLAVALLGLPWPQEAG). His-46 provides a ligand contact to Zn(2+). The cysteines at positions 79 and 190 are disulfide-linked. A Zn(2+)-binding site is contributed by Glu-199. A disulfide bond links Cys-207 and Cys-215.

This sequence belongs to the somatotropin/prolactin family.

The protein resides in the secreted. Its function is as follows. Plays an important role in growth control. Its major role in stimulating body growth is to stimulate the liver and other tissues to secrete IGF1. It stimulates both the differentiation and proliferation of myoblasts. It also stimulates amino acid uptake and protein synthesis in muscle and other tissues. In Galago senegalensis (Northern lesser bushbaby), this protein is Somatotropin (GH1).